The primary structure comprises 294 residues: Diaminopimelate epimerase (294 aa).

The substrate site is built by Asn-11 and Asn-78. The Proton donor role is filled by Cys-87. Residues 88-89 (GN), Asn-167, Asn-203, and 221-222 (ER) each bind substrate. Catalysis depends on Cys-230, which acts as the Proton acceptor. 231–232 (GT) contacts substrate.

Belongs to the diaminopimelate epimerase family. Homodimer.

The protein resides in the cytoplasm. It carries out the reaction (2S,6S)-2,6-diaminopimelate = meso-2,6-diaminopimelate. It participates in amino-acid biosynthesis; L-lysine biosynthesis via DAP pathway; DL-2,6-diaminopimelate from LL-2,6-diaminopimelate: step 1/1. Functionally, catalyzes the stereoinversion of LL-2,6-diaminopimelate (L,L-DAP) to meso-diaminopimelate (meso-DAP), a precursor of L-lysine and an essential component of the bacterial peptidoglycan. The sequence is that of Diaminopimelate epimerase from Mycobacterium avium (strain 104).